The following is a 685-amino-acid chain: Dammaradiene synthase (685 aa).

2 PFTB repeats span residues 82 to 123 and 265 to 308; these read MDKM…RLLN and IREA…DPVV. The active-site Proton donor is the Asp-400. PFTB repeat units follow at residues 424–465 and 621–672; these read ITRC…KAMV and IGHG…ARYR.

Belongs to the terpene cyclase/mutase family.

The enzyme catalyses squalene = dammara-20,24-diene. Functionally, squalene cyclase producing the tetracyclic triterpene dammaradiene. This Dryopteris crassirhizoma (Thick stemmed wood fern) protein is Dammaradiene synthase (DCD).